A 384-amino-acid chain; its full sequence is Urea transporter 1 (384 aa).

At E39 the chain carries Phosphoserine. The next 5 membrane-spanning stretches (helical) occupy residues 61–81 (ISQVVFVSNPISGILILVGLL), 85–105 (PWWALCGCVGTVVSTLTALLL), 111–131 (AIAAGLQGYNATLVGILMAVF), 138–158 (FWWLIFPVSAMSMTCPVFSSA), and 168–188 (LPVFTLPFNMALSMYLSATGH). N-linked (GlcNAc...) asparagine glycosylation occurs at N206. A run of 4 helical transmembrane segments spans residues 250-270 (LMCLHAAIGSLLGVIAGLSLA), 276-296 (IYFGLWGFNSSLACIAIGGMF), 305-325 (LLALACALFTAYFGACMAHLM), and 327-347 (VVHLPACTWSFCLATLLFLLL).

It belongs to the urea transporter family. As to quaternary structure, homotrimer; each subunit contains a pore through which urea permeates. Identified in a complex with STOM. Post-translationally, N-glycosylated in red blood cells, as well as in most non-erythroid tissues, except in the gastrocnemius muscle and in the gastrointestinal tract, including liver, colon and stomach. Expressed in brain, kidney, heart, liver, lung, skeletal muscle, spleen, testis, ureter and urinary bladder (at protein level). Along the gastrointestinal tract, detected in colon, jejunum and stomach (at protein level). In the kidney, expressed in some microvessels of the inner and outer medulla, but not all (at protein level). Not detected in the cortex (at protein level). Detected in the urothelium all along the urinary tract, including the papilla surface, the ureter, the bladder and the urethra (at protein level). In the brain, expressed at the border of the corpus callosum and striatum in astrocytic cellular processes surrounding blood microvessels (at protein level). Detected in erythrocytes (at protein level).

It is found in the cell membrane. The protein localises to the basolateral cell membrane. It carries out the reaction urea(in) = urea(out). Functionally, mediates the transport of urea driven by a concentration gradient across the cell membranes of erythrocytes and the renal inner medullary collecting duct which is critical to the urinary concentrating mechanism. Facilitates water transport in erythrocytes. In Mus musculus (Mouse), this protein is Urea transporter 1 (Slc14a1).